We begin with the raw amino-acid sequence, 460 residues long: Spermatogenesis-defective protein 39 homolog (460 aa).

Phosphothreonine is present on threonine 21. A disordered region spans residues 70–101 (SIKETAGSSGSTSEGREQMKGRNSFYTQLPKP). Low complexity predominate over residues 73–82 (ETAGSSGSTS). Threonine 115 bears the Phosphothreonine mark. Residues serine 119, serine 122, and serine 128 each carry the phosphoserine modification. Residues 121-133 (QSLSDALSDTPAK) are compositionally biased toward polar residues. The interval 121–141 (QSLSDALSDTPAKTYSPELGR) is disordered. Phosphothreonine is present on threonine 130.

Belongs to the SPE39 family. As to quaternary structure, interacts with VPS33B. Associates with the homotypic fusion and vacuole protein sorting (HOPS) complex; impaired by VPS33B. Interacts with RAB11A.

The protein localises to the cytoplasm. Its subcellular location is the cytoplasmic vesicle. The protein resides in the early endosome. It localises to the recycling endosome. It is found in the late endosome. Its function is as follows. Proposed to be involved in endosomal maturation implicating in part VPS33B. In epithelial cells, the VPS33B:VIPAS39 complex may play a role in the apical RAB11A-dependent recycling pathway and in the maintenance of the apical-basolateral polarity. May play a role in lysosomal trafficking, probably via association with the core HOPS complex in a discrete population of endosomes; the functions seems to be independent of VPS33B. May play a role in vesicular trafficking during spermatogenesis. May be involved in direct or indirect transcriptional regulation of E-cadherin. The polypeptide is Spermatogenesis-defective protein 39 homolog (Vipas39) (Rattus norvegicus (Rat)).